The following is a 135-amino-acid chain: Methylglyoxal synthase (135 aa).

Positions 1-135 constitute an MGS-like domain; that stretch reads MQKTLALVAH…GLYERAVPEF (135 aa). Residues His-10, Lys-14, 36–39, and 56–57 each bind substrate; these read TGTT and SG. The active-site Proton donor/acceptor is the Asp-62. Residue His-89 participates in substrate binding.

It belongs to the methylglyoxal synthase family.

It catalyses the reaction dihydroxyacetone phosphate = methylglyoxal + phosphate. Catalyzes the formation of methylglyoxal from dihydroxyacetone phosphate. The chain is Methylglyoxal synthase from Pseudoalteromonas atlantica (strain T6c / ATCC BAA-1087).